The primary structure comprises 308 residues: Elongation factor Ts (308 aa).

Residues 80-83 (TDFV) form an involved in Mg(2+) ion dislocation from EF-Tu region.

This sequence belongs to the EF-Ts family.

The protein resides in the cytoplasm. In terms of biological role, associates with the EF-Tu.GDP complex and induces the exchange of GDP to GTP. It remains bound to the aminoacyl-tRNA.EF-Tu.GTP complex up to the GTP hydrolysis stage on the ribosome. In Sphingopyxis alaskensis (strain DSM 13593 / LMG 18877 / RB2256) (Sphingomonas alaskensis), this protein is Elongation factor Ts.